Here is a 430-residue protein sequence, read N- to C-terminus: 3-phosphoshikimate 1-carboxyvinyltransferase (430 aa).

3-phosphoshikimate is bound by residues K25, S26, and R30. K25 provides a ligand contact to phosphoenolpyruvate. Residues G97 and R125 each coordinate phosphoenolpyruvate. Positions 170, 172, 318, and 345 each coordinate 3-phosphoshikimate. Residue Q172 coordinates phosphoenolpyruvate. D318 acts as the Proton acceptor in catalysis. Positions 349 and 391 each coordinate phosphoenolpyruvate.

It belongs to the EPSP synthase family. In terms of assembly, monomer.

It is found in the cytoplasm. It catalyses the reaction 3-phosphoshikimate + phosphoenolpyruvate = 5-O-(1-carboxyvinyl)-3-phosphoshikimate + phosphate. Its pathway is metabolic intermediate biosynthesis; chorismate biosynthesis; chorismate from D-erythrose 4-phosphate and phosphoenolpyruvate: step 6/7. Catalyzes the transfer of the enolpyruvyl moiety of phosphoenolpyruvate (PEP) to the 5-hydroxyl of shikimate-3-phosphate (S3P) to produce enolpyruvyl shikimate-3-phosphate and inorganic phosphate. This chain is 3-phosphoshikimate 1-carboxyvinyltransferase, found in Shouchella clausii (strain KSM-K16) (Alkalihalobacillus clausii).